A 572-amino-acid polypeptide reads, in one-letter code: Proline--tRNA ligase (572 aa).

It belongs to the class-II aminoacyl-tRNA synthetase family. ProS type 1 subfamily. Homodimer.

The protein resides in the cytoplasm. It carries out the reaction tRNA(Pro) + L-proline + ATP = L-prolyl-tRNA(Pro) + AMP + diphosphate. Catalyzes the attachment of proline to tRNA(Pro) in a two-step reaction: proline is first activated by ATP to form Pro-AMP and then transferred to the acceptor end of tRNA(Pro). As ProRS can inadvertently accommodate and process non-cognate amino acids such as alanine and cysteine, to avoid such errors it has two additional distinct editing activities against alanine. One activity is designated as 'pretransfer' editing and involves the tRNA(Pro)-independent hydrolysis of activated Ala-AMP. The other activity is designated 'posttransfer' editing and involves deacylation of mischarged Ala-tRNA(Pro). The misacylated Cys-tRNA(Pro) is not edited by ProRS. The protein is Proline--tRNA ligase of Escherichia fergusonii (strain ATCC 35469 / DSM 13698 / CCUG 18766 / IAM 14443 / JCM 21226 / LMG 7866 / NBRC 102419 / NCTC 12128 / CDC 0568-73).